Reading from the N-terminus, the 556-residue chain is Arginine--tRNA ligase (556 aa).

A 'HIGH' region motif is present at residues 117-127; sequence PNVAKQMHVGH.

The protein belongs to the class-I aminoacyl-tRNA synthetase family. Monomer.

Its subcellular location is the cytoplasm. It catalyses the reaction tRNA(Arg) + L-arginine + ATP = L-arginyl-tRNA(Arg) + AMP + diphosphate. This Cutibacterium acnes (strain DSM 16379 / KPA171202) (Propionibacterium acnes) protein is Arginine--tRNA ligase.